Consider the following 443-residue polypeptide: Probable nitrate/nitrite antiporter NarK2 (443 aa).

Helical transmembrane passes span 32–52, 66–86, 95–115, 123–143, 172–192, 210–230, 256–276, 292–312, 314–334, 346–366, 383–403, and 409–429; these read ITTF…ALVV, LFWL…IWTF, HLVT…GFAV, WVLL…SGYM, IVQF…LLGG, NATF…WVYL, SLYI…PLLI, YAFL…PISD, LGGA…ALLV, FPMF…GNAS, VIGW…TLAA, and TGGF…NFFL.

Belongs to the major facilitator superfamily. Nitrate/nitrite porter (TC 2.A.1.8) family.

It localises to the cell membrane. It carries out the reaction nitrate(in) + nitrite(out) = nitrate(out) + nitrite(in). Functionally, probable nitrate/nitrite antiporter that may be involved in nitrate import and nitrite export during anaerobic growth. This Thermus thermophilus protein is Probable nitrate/nitrite antiporter NarK2.